Here is a 262-residue protein sequence, read N- to C-terminus: Zinc import ATP-binding protein ZnuC (262 aa).

Positions 6-221 constitute an ABC transporter domain; it reads IRLDKVAVTL…PAFVELFGKN (216 aa). 38–45 contributes to the ATP binding site; sequence GPNGAGKT.

Belongs to the ABC transporter superfamily. Zinc importer (TC 3.A.1.15.5) family. As to quaternary structure, the complex is composed of two ATP-binding proteins (ZnuC), two transmembrane proteins (ZnuB) and a solute-binding protein (ZnuA).

The protein localises to the cell inner membrane. The catalysed reaction is Zn(2+)(out) + ATP(in) + H2O(in) = Zn(2+)(in) + ADP(in) + phosphate(in) + H(+)(in). Part of the ABC transporter complex ZnuABC involved in zinc import. Responsible for energy coupling to the transport system. In Pseudomonas syringae pv. syringae (strain B728a), this protein is Zinc import ATP-binding protein ZnuC.